Here is a 57-residue protein sequence, read N- to C-terminus: MGAEVFHSLKKVLGEKGLASGVGDEGGFAPNLGSNIRRAGYTAVISHRVAKYNQLLR.

The active-site Proton donor is the Glu25.

This sequence belongs to the enolase family. Mg(2+) is required as a cofactor.

The protein resides in the cytoplasm. It localises to the secreted. Its subcellular location is the cell surface. The catalysed reaction is (2R)-2-phosphoglycerate = phosphoenolpyruvate + H2O. Its pathway is carbohydrate degradation; glycolysis; pyruvate from D-glyceraldehyde 3-phosphate: step 4/5. Its function is as follows. Catalyzes the reversible conversion of 2-phosphoglycerate (2-PG) into phosphoenolpyruvate (PEP). It is essential for the degradation of carbohydrates via glycolysis. The chain is Enolase from Clostridioides difficile (Peptoclostridium difficile).